The following is a 436-amino-acid chain: Phosphate-repressible acid phosphatase (436 aa).

The signal sequence occupies residues 1–20 (MKGTAASALLIALSATAAQA). Asparagine 227, asparagine 283, and asparagine 304 each carry an N-linked (GlcNAc...) asparagine glycan.

Monomer.

It carries out the reaction a phosphate monoester + H2O = an alcohol + phosphate. This is Phosphate-repressible acid phosphatase (pacA) from Aspergillus niger.